Reading from the N-terminus, the 396-residue chain is tRNA-specific 2-thiouridylase MnmA (396 aa).

ATP is bound by residues 11–18 and Met37; that span reads GLSGGVDS. An interaction with target base in tRNA region spans residues 97–99; the sequence is NPD. Cys102 acts as the Nucleophile in catalysis. Cys102 and Cys225 are joined by a disulfide. Residue Gly126 coordinates ATP. An interaction with tRNA region spans residues 175–177; sequence KDQ. Cys225 serves as the catalytic Cysteine persulfide intermediate. The interaction with tRNA stretch occupies residues 343 to 344; that stretch reads RY.

The protein belongs to the MnmA/TRMU family.

The protein localises to the cytoplasm. The catalysed reaction is S-sulfanyl-L-cysteinyl-[protein] + uridine(34) in tRNA + AH2 + ATP = 2-thiouridine(34) in tRNA + L-cysteinyl-[protein] + A + AMP + diphosphate + H(+). Its function is as follows. Catalyzes the 2-thiolation of uridine at the wobble position (U34) of tRNA, leading to the formation of s(2)U34. This Methylibium petroleiphilum (strain ATCC BAA-1232 / LMG 22953 / PM1) protein is tRNA-specific 2-thiouridylase MnmA.